Consider the following 190-residue polypeptide: Pyridoxal 5'-phosphate synthase subunit PdxT (190 aa).

46–48 (GES) lines the L-glutamine pocket. Cysteine 78 functions as the Nucleophile in the catalytic mechanism. L-glutamine contacts are provided by residues arginine 106 and 135 to 136 (IR). Active-site charge relay system residues include histidine 171 and glutamate 173.

Belongs to the glutaminase PdxT/SNO family. As to quaternary structure, in the presence of PdxS, forms a dodecamer of heterodimers. Only shows activity in the heterodimer.

The catalysed reaction is aldehydo-D-ribose 5-phosphate + D-glyceraldehyde 3-phosphate + L-glutamine = pyridoxal 5'-phosphate + L-glutamate + phosphate + 3 H2O + H(+). It carries out the reaction L-glutamine + H2O = L-glutamate + NH4(+). The protein operates within cofactor biosynthesis; pyridoxal 5'-phosphate biosynthesis. In terms of biological role, catalyzes the hydrolysis of glutamine to glutamate and ammonia as part of the biosynthesis of pyridoxal 5'-phosphate. The resulting ammonia molecule is channeled to the active site of PdxS. This Dictyoglomus turgidum (strain DSM 6724 / Z-1310) protein is Pyridoxal 5'-phosphate synthase subunit PdxT.